Reading from the N-terminus, the 727-residue chain is Glucans biosynthesis glucosyltransferase H (727 aa).

The tract at residues 17-41 is disordered; that stretch reads GSAMPNERPGPMEPQSLSQMPEGFP. A run of 6 helical transmembrane segments spans residues 58 to 80, 95 to 117, 407 to 429, 457 to 479, 499 to 521, and 572 to 594; these read FFVVGGALLLSSFAIYEMGAVFS, FAINFCWIALAFCSGIAGFLLLL, GIMAYLSSPFWLLLILTGLMLAL, ALRLFYITMVVLFGPKIFGVLLL, VLFEVILSALIAPIMMFIHCGAV, and LLAWMSPALIGLWLAVPISAWTG.

Belongs to the glycosyltransferase 2 family. OpgH subfamily.

It is found in the cell inner membrane. Its pathway is glycan metabolism; osmoregulated periplasmic glucan (OPG) biosynthesis. In terms of biological role, involved in the biosynthesis of osmoregulated periplasmic glucans (OPGs). This chain is Glucans biosynthesis glucosyltransferase H, found in Shewanella oneidensis (strain ATCC 700550 / JCM 31522 / CIP 106686 / LMG 19005 / NCIMB 14063 / MR-1).